The sequence spans 384 residues: S-adenosylmethionine synthase (384 aa).

His-15 serves as a coordination point for ATP. Asp-17 contacts Mg(2+). A K(+)-binding site is contributed by Glu-43. 2 residues coordinate L-methionine: Glu-56 and Gln-99. The interval 99–109 is flexible loop; sequence QSPDINQGVDR. Residues 164–166, 230–231, Asp-239, 245–246, Ala-262, and Lys-266 contribute to the ATP site; these read DAK, RF, and RK. Asp-239 provides a ligand contact to L-methionine. Lys-270 contributes to the L-methionine binding site.

The protein belongs to the AdoMet synthase family. In terms of assembly, homotetramer; dimer of dimers. The cofactor is Mg(2+). Requires K(+) as cofactor.

The protein resides in the cytoplasm. The enzyme catalyses L-methionine + ATP + H2O = S-adenosyl-L-methionine + phosphate + diphosphate. Its pathway is amino-acid biosynthesis; S-adenosyl-L-methionine biosynthesis; S-adenosyl-L-methionine from L-methionine: step 1/1. Its function is as follows. Catalyzes the formation of S-adenosylmethionine (AdoMet) from methionine and ATP. The overall synthetic reaction is composed of two sequential steps, AdoMet formation and the subsequent tripolyphosphate hydrolysis which occurs prior to release of AdoMet from the enzyme. This Citrobacter koseri (strain ATCC BAA-895 / CDC 4225-83 / SGSC4696) protein is S-adenosylmethionine synthase.